We begin with the raw amino-acid sequence, 270 residues long: Phosphonates import ATP-binding protein PhnC (270 aa).

One can recognise an ABC transporter domain in the interval 2-245 (LVIEGLTCRF…IARELYDLEA (244 aa)). 34–41 (GRSGAGKS) contacts ATP.

It belongs to the ABC transporter superfamily. Phosphonates importer (TC 3.A.1.9.1) family. As to quaternary structure, the complex is composed of two ATP-binding proteins (PhnC), two transmembrane proteins (PhnE) and a solute-binding protein (PhnD).

Its subcellular location is the cell inner membrane. The catalysed reaction is phosphonate(out) + ATP + H2O = phosphonate(in) + ADP + phosphate + H(+). Functionally, part of the ABC transporter complex PhnCDE involved in phosphonates import. Responsible for energy coupling to the transport system. This is Phosphonates import ATP-binding protein PhnC from Rhodopseudomonas palustris (strain BisB5).